The chain runs to 172 residues: DNA-directed RNA polymerase II subunit rpb7 (172 aa).

It belongs to the eukaryotic RPB7/RPC8 RNA polymerase subunit family. In terms of assembly, component of the RNA polymerase II (Pol II) complex consisting of 12 subunits. RPB4 and RPB7 form a subcomplex that protrudes from the 10-subunit Pol II core complex.

It localises to the nucleus. DNA-dependent RNA polymerase catalyzes the transcription of DNA into RNA using the four ribonucleoside triphosphates as substrates. Component of RNA polymerase II which synthesizes mRNA precursors and many functional non-coding RNAs. Pol II is the central component of the basal RNA polymerase II transcription machinery. It is composed of mobile elements that move relative to each other. RPB7 is part of a subcomplex with RPB4 that binds to a pocket formed by RPB1, RPB2 and RPB6 at the base of the clamp element. The RPB4-RPB7 subcomplex seems to lock the clamp via RPB7 in the closed conformation thus preventing double-stranded DNA to enter the active site cleft. The RPB4-RPB7 subcomplex binds single-stranded DNA and RNA. In Dictyostelium discoideum (Social amoeba), this protein is DNA-directed RNA polymerase II subunit rpb7 (polr2g).